We begin with the raw amino-acid sequence, 86 residues long: Defensin-like protein 259 (86 aa).

Residues 1-25 (MKNASLKLPLLIFILVITSNLGAEA) form the signal peptide. Cystine bridges form between cysteine 60/cysteine 76, cysteine 66/cysteine 83, and cysteine 70/cysteine 85.

The protein belongs to the DEFL family.

The protein resides in the secreted. The polypeptide is Defensin-like protein 259 (Arabidopsis thaliana (Mouse-ear cress)).